We begin with the raw amino-acid sequence, 405 residues long: MSITEANALADAPGTRNFTINFGPQHPAAHGVLRLVLELDGEVVERVDPHIGLLHRGTEKLIEQKTYLQAIPYFDRLDYVAPMNQEHAFCLAAEKLLGITVPRRGQLIRVLYSEIGRILSHLLNITTQALDVGALTPPLWGFEEREKLMMFYERASGSRMHAAFFRIGGVHQDLPPKLIGDIDIWCDAFPEKLDDLEILLTDNRIFKQRNVDIGVVTLDQAWEWGFSGVMVRGSGAAWDLRRAQPYECYDEMEFDIPIGKNGDCYDRYCIRVEEMRQSVRIMKQCIAKMRAPDGQGPVVIEDNKITPPRRGEMKRSMEALIHHFKLYTEGVHVPPGEVYAAVEAPKGEFGVYLVADGTNKPYKCKIRAPGFAHLQAMDFICKGHLLADVSAILGSLDIVFGEVDR.

This sequence belongs to the complex I 49 kDa subunit family. In terms of assembly, NDH-1 is composed of 14 different subunits. Subunits NuoB, C, D, E, F, and G constitute the peripheral sector of the complex.

The protein resides in the cell inner membrane. It catalyses the reaction a quinone + NADH + 5 H(+)(in) = a quinol + NAD(+) + 4 H(+)(out). Its function is as follows. NDH-1 shuttles electrons from NADH, via FMN and iron-sulfur (Fe-S) centers, to quinones in the respiratory chain. The immediate electron acceptor for the enzyme in this species is believed to be ubiquinone. Couples the redox reaction to proton translocation (for every two electrons transferred, four hydrogen ions are translocated across the cytoplasmic membrane), and thus conserves the redox energy in a proton gradient. This chain is NADH-quinone oxidoreductase subunit D, found in Afipia carboxidovorans (strain ATCC 49405 / DSM 1227 / KCTC 32145 / OM5) (Oligotropha carboxidovorans).